Reading from the N-terminus, the 139-residue chain is Large ribosomal subunit protein bL17 (139 aa).

It belongs to the bacterial ribosomal protein bL17 family. As to quaternary structure, part of the 50S ribosomal subunit. Contacts protein L32.

This is Large ribosomal subunit protein bL17 from Sphingopyxis alaskensis (strain DSM 13593 / LMG 18877 / RB2256) (Sphingomonas alaskensis).